Here is a 618-residue protein sequence, read N- to C-terminus: DNA mismatch repair protein MutL (618 aa).

A compositionally biased stretch (low complexity) spans 367–378 (EPTAAREPATPR). The disordered stretch occupies residues 367–402 (EPTAAREPATPRYSGGASGGNGGRQTAGGWPHAQPG). The span at 382–392 (GASGGNGGRQT) shows a compositional bias: gly residues.

It belongs to the DNA mismatch repair MutL/HexB family.

Functionally, this protein is involved in the repair of mismatches in DNA. It is required for dam-dependent methyl-directed DNA mismatch repair. May act as a 'molecular matchmaker', a protein that promotes the formation of a stable complex between two or more DNA-binding proteins in an ATP-dependent manner without itself being part of a final effector complex. This chain is DNA mismatch repair protein MutL, found in Salmonella choleraesuis (strain SC-B67).